The chain runs to 749 residues: Poly(U)-binding-splicing factor rnp-6 (749 aa).

RRM domains lie at 102-176 (SRIY…LKVN) and 207-285 (FRVY…KCVT). Disordered regions lie at residues 323–388 (AGSS…PDVV) and 457–480 (IEEE…KMKR). Residues 330–354 (PSESGGSRAASPAPRAQSPATPSSS) are compositionally biased toward low complexity. In terms of domain architecture, RRM 3; atypical spans 658–739 (NVIVLRNMVT…NTVKAEAYDQ (82 aa)).

Belongs to the RRM half pint family.

The protein localises to the nucleus. Its function is as follows. DNA- and RNA-binding protein, involved in several nuclear processes such as pre-mRNA splicing, apoptosis and transcription regulation. Ensures the correct splicing of genes involved in immunity to promote longevity in response to infection by pathogenic bacteria such as S.aureus. The polypeptide is Poly(U)-binding-splicing factor rnp-6 (Caenorhabditis elegans).